We begin with the raw amino-acid sequence, 392 residues long: 3-ketoacyl-CoA thiolase (392 aa).

The active-site Acyl-thioester intermediate is the C95. Active-site proton acceptor residues include H347 and C377.

This sequence belongs to the thiolase-like superfamily. Thiolase family. Heterotetramer of two alpha chains (FadB) and two beta chains (FadA).

Its subcellular location is the cytoplasm. The enzyme catalyses an acyl-CoA + acetyl-CoA = a 3-oxoacyl-CoA + CoA. It participates in lipid metabolism; fatty acid beta-oxidation. Catalyzes the final step of fatty acid oxidation in which acetyl-CoA is released and the CoA ester of a fatty acid two carbons shorter is formed. The protein is 3-ketoacyl-CoA thiolase of Chromohalobacter salexigens (strain ATCC BAA-138 / DSM 3043 / CIP 106854 / NCIMB 13768 / 1H11).